We begin with the raw amino-acid sequence, 157 residues long: Transcription elongation factor GreA (157 aa).

The stretch at 13-75 (RARLEAELEE…EIKSILARAQ (63 aa)) forms a coiled coil.

Belongs to the GreA/GreB family.

Its function is as follows. Necessary for efficient RNA polymerase transcription elongation past template-encoded arresting sites. The arresting sites in DNA have the property of trapping a certain fraction of elongating RNA polymerases that pass through, resulting in locked ternary complexes. Cleavage of the nascent transcript by cleavage factors such as GreA or GreB allows the resumption of elongation from the new 3'terminus. GreA releases sequences of 2 to 3 nucleotides. This chain is Transcription elongation factor GreA, found in Roseiflexus castenholzii (strain DSM 13941 / HLO8).